The sequence spans 201 residues: Recombination protein RecR (201 aa).

The C4-type zinc-finger motif lies at 57–72; the sequence is CCDCRTFTEEERCTIC. The 96-residue stretch at 81–176 folds into the Toprim domain; that stretch reads GQICVVESPA…AASRIAHGVP (96 aa).

Belongs to the RecR family.

In terms of biological role, may play a role in DNA repair. It seems to be involved in an RecBC-independent recombinational process of DNA repair. It may act with RecF and RecO. The polypeptide is Recombination protein RecR (Proteus mirabilis (strain HI4320)).